The chain runs to 205 residues: MTEFESAPAYQEAKYLTSAAEFDQLPPDQGAEIAFIGRSNAGKSSALNIITGIKGLARTSKTPGRTQMINFFALNEHERLVDLPGYGYAKVPRMVQKRWEELVDSYLKKRRCLKGLVVVMDIRHPLKEMDEDVIEWAVNYDIPIHILLTKSDKLSQNAAKKTLGEVQTAISAYGEKLTLQLFSSHDRTGLDEVKAVLSQWFRSEP.

The region spanning 29–203 (QGAEIAFIGR…KAVLSQWFRS (175 aa)) is the EngB-type G domain. Residues 37–44 (GRSNAGKS), 64–68 (GRTQM), 82–85 (DLPG), 149–152 (TKSD), and 182–184 (FSS) each bind GTP. Positions 44 and 66 each coordinate Mg(2+).

It belongs to the TRAFAC class TrmE-Era-EngA-EngB-Septin-like GTPase superfamily. EngB GTPase family. Requires Mg(2+) as cofactor.

In terms of biological role, necessary for normal cell division and for the maintenance of normal septation. This Coxiella burnetii (strain CbuG_Q212) (Coxiella burnetii (strain Q212)) protein is Probable GTP-binding protein EngB.